Here is a 538-residue protein sequence, read N- to C-terminus: Cytochrome P450 monooxygenase verH (538 aa).

Residues 2-21 (VFAMLVVCWSIFLGLWMLVS) traverse the membrane as a helical segment. Heme is bound at residue Cys-445.

Belongs to the cytochrome P450 family. It depends on heme as a cofactor.

Its subcellular location is the membrane. It functions in the pathway secondary metabolite biosynthesis; terpenoid biosynthesis. Its pathway is mycotoxin biosynthesis. Functionally, cytochrome P450 monooxygenase; part of the gene cluster that mediates the biosynthesis of the neurotoxin verrucosidin, a methylated alpha-pyrone polyketide that inhibits oxidative phosphorylation in mitochondria and thereby causes neurological diseases. The carbon backbone of verrucosidin is synthesized by the HR-PKS verA, and further modified by the other verrucodidin cluster enzymes. The sequence is that of Cytochrome P450 monooxygenase verH from Penicillium polonicum.